We begin with the raw amino-acid sequence, 267 residues long: Glutamate racemase (267 aa).

Residues 13–14 and 45–46 each bind substrate; these read DS and YS. Catalysis depends on Cys-77, which acts as the Proton donor/acceptor. A substrate-binding site is contributed by 78 to 79; sequence NT. Cys-188 serves as the catalytic Proton donor/acceptor. 189-190 serves as a coordination point for substrate; sequence TH.

Belongs to the aspartate/glutamate racemases family.

It carries out the reaction L-glutamate = D-glutamate. It participates in cell wall biogenesis; peptidoglycan biosynthesis. Provides the (R)-glutamate required for cell wall biosynthesis. The protein is Glutamate racemase of Histophilus somni (strain 129Pt) (Haemophilus somnus).